The following is a 294-amino-acid chain: MDVAEENSEEALLIKQQRKEKKEVQAKIQCMKNSVPKNDKKRRKQMTEDIAKLEAEVEARHKEELEALAQKPTEPTQVSSITNGVTSLDLGSEEPVQQPRVSKAQKRREKKAAQEKERDDRIAEAEIANLSGARHLESQKLAQILAERELQIRQIPSDGHCMYRAIEHQLNEQGNSLTVANLRSQTADYMQKRAEDFLPFLTNSSTGDMYTQEEFQKYCTDIVNTPAWGGQLELRALSHILKTPIEVIQAESLPIVIGEEYSNKPITLVYMRHAYGLGEHYNSVEQLDTSTENS.

The disordered stretch occupies residues 85–120 (VTSLDLGSEEPVQQPRVSKAQKRREKKAAQEKERDD). The segment covering 111 to 120 (KAAQEKERDD) has biased composition (basic and acidic residues). An OTU domain is found at 150 to 287 (LQIRQIPSDG…GEHYNSVEQL (138 aa)). The interval 155–161 (IPSDGHC) is cys-loop. D158 is a catalytic residue. The active-site Nucleophile is the C161. The tract at residues 222–232 (IVNTPAWGGQL) is variable-loop. The segment at 270 to 280 (YMRHAYGLGEH) is his-loop. H280 is an active-site residue.

It catalyses the reaction Thiol-dependent hydrolysis of ester, thioester, amide, peptide and isopeptide bonds formed by the C-terminal Gly of ubiquitin (a 76-residue protein attached to proteins as an intracellular targeting signal).. In terms of biological role, deubiquitinating enzyme that may play a role in the ubiquitin-dependent regulation of different cellular processes. In Xenopus laevis (African clawed frog), this protein is Deubiquitinase OTUD6B (otud6b).